The sequence spans 432 residues: Trigger factor (432 aa).

The 86-residue stretch at 161–246 folds into the PPIase FKBP-type domain; that stretch reads DDRVTIDFVG…LKKVENMVLP (86 aa).

This sequence belongs to the FKBP-type PPIase family. Tig subfamily.

The protein resides in the cytoplasm. It catalyses the reaction [protein]-peptidylproline (omega=180) = [protein]-peptidylproline (omega=0). Functionally, involved in protein export. Acts as a chaperone by maintaining the newly synthesized protein in an open conformation. Functions as a peptidyl-prolyl cis-trans isomerase. The polypeptide is Trigger factor (Haemophilus influenzae (strain PittGG)).